The primary structure comprises 481 residues: NADH-quinone oxidoreductase subunit N (481 aa).

The next 14 membrane-spanning stretches (helical) occupy residues 11 to 31 (AYPEIFLLLMVCVVMLADLFA), 37 to 57 (YLAFYLSLLTLAGCALVTCGI), 74 to 94 (AMSDILKLLIYVTVAAVLIYS), 103 to 123 (LLKGEFFSLALFATLGMMVMV), 128 to 148 (LITLYLGLELLSLSLYAMVAL), 162 to 182 (FFVLGALASGFLLYGMSMLYG), 205 to 225 (IFIIGLVFVVAGIGFKLSAVP), 238 to 258 (PTAVTLFIGSAPKFAAFGFVM), 272 to 292 (WQGMLVLLAVASMAVGNIAAI), 300 to 320 (MLAYSTISHMGFVLLGFIAAG), 328 to 348 (MFYVIAYVLMTLGAFGIIMLV), 371 to 391 (LAFMMLLVMFSMAGIPPMIGF), 405 to 425 (GYIWLVVVAVMLSLIGAFYYL), and 457 to 477 (LAIILLGMFPQMLMGLSLSAI).

The protein belongs to the complex I subunit 2 family. As to quaternary structure, NDH-1 is composed of 14 different subunits. Subunits NuoA, H, J, K, L, M, N constitute the membrane sector of the complex.

Its subcellular location is the cell inner membrane. It carries out the reaction a quinone + NADH + 5 H(+)(in) = a quinol + NAD(+) + 4 H(+)(out). Functionally, NDH-1 shuttles electrons from NADH, via FMN and iron-sulfur (Fe-S) centers, to quinones in the respiratory chain. The immediate electron acceptor for the enzyme in this species is believed to be ubiquinone. Couples the redox reaction to proton translocation (for every two electrons transferred, four hydrogen ions are translocated across the cytoplasmic membrane), and thus conserves the redox energy in a proton gradient. This Nitrosomonas europaea (strain ATCC 19718 / CIP 103999 / KCTC 2705 / NBRC 14298) protein is NADH-quinone oxidoreductase subunit N.